Here is a 336-residue protein sequence, read N- to C-terminus: 4-hydroxy-3-methylbut-2-enyl diphosphate reductase (336 aa).

C37 contributes to the [4Fe-4S] cluster binding site. (2E)-4-hydroxy-3-methylbut-2-enyl diphosphate contacts are provided by H66 and H99. H66 and H99 together coordinate dimethylallyl diphosphate. Isopentenyl diphosphate is bound by residues H66 and H99. A [4Fe-4S] cluster-binding site is contributed by C121. Position 149 (H149) interacts with (2E)-4-hydroxy-3-methylbut-2-enyl diphosphate. H149 lines the dimethylallyl diphosphate pocket. H149 contacts isopentenyl diphosphate. Catalysis depends on E151, which acts as the Proton donor. T189 lines the (2E)-4-hydroxy-3-methylbut-2-enyl diphosphate pocket. C219 contacts [4Fe-4S] cluster. S247, S248, N249, and S292 together coordinate (2E)-4-hydroxy-3-methylbut-2-enyl diphosphate. Positions 247, 248, 249, and 292 each coordinate dimethylallyl diphosphate. The isopentenyl diphosphate site is built by S247, S248, N249, and S292.

Belongs to the IspH family. [4Fe-4S] cluster serves as cofactor.

The catalysed reaction is isopentenyl diphosphate + 2 oxidized [2Fe-2S]-[ferredoxin] + H2O = (2E)-4-hydroxy-3-methylbut-2-enyl diphosphate + 2 reduced [2Fe-2S]-[ferredoxin] + 2 H(+). It carries out the reaction dimethylallyl diphosphate + 2 oxidized [2Fe-2S]-[ferredoxin] + H2O = (2E)-4-hydroxy-3-methylbut-2-enyl diphosphate + 2 reduced [2Fe-2S]-[ferredoxin] + 2 H(+). The protein operates within isoprenoid biosynthesis; dimethylallyl diphosphate biosynthesis; dimethylallyl diphosphate from (2E)-4-hydroxy-3-methylbutenyl diphosphate: step 1/1. It participates in isoprenoid biosynthesis; isopentenyl diphosphate biosynthesis via DXP pathway; isopentenyl diphosphate from 1-deoxy-D-xylulose 5-phosphate: step 6/6. Functionally, catalyzes the conversion of 1-hydroxy-2-methyl-2-(E)-butenyl 4-diphosphate (HMBPP) into a mixture of isopentenyl diphosphate (IPP) and dimethylallyl diphosphate (DMAPP). Acts in the terminal step of the DOXP/MEP pathway for isoprenoid precursor biosynthesis. The chain is 4-hydroxy-3-methylbut-2-enyl diphosphate reductase from Rhodococcus jostii (strain RHA1).